A 405-amino-acid chain; its full sequence is MEIILGIVMFTVIVLALALMILFAKSKLVSEGDITIKVNDEKELTMPAGGKLLGALASQGIFVPSACGGGGSCGQCRVVVKSGGGDILPTELSHISKREAREGCRLSCQVNVKTDMDIEVPEEVFGVKKWECTVISNDNKATFIKELKLAIPEGEEVPFRAGGYIQIEAPPHTVAYKDFDIPKEYHEDWDKYNLWQYVSKVNEPILRAYSMASYPEEKGIIMLNVRIATPPPRVPNAPPGQMSSYIWSLKPGDKVTISGPFGEFFAKDTDAEMVFIGGGAGMAPMRSHIFDQLKRLHSKRKITFWYGARSKREMFYVEDFDQLAAEFPNFTWHVALSDPLPEDNWDGYTGFIHNVVYENHLKNHEAPEDCEFYMCGPPIMNQSVIKMLKDLGVEDENILLDDFGG.

The chain crosses the membrane as a helical span at residues 3–23 (IILGIVMFTVIVLALALMILF). A 2Fe-2S ferredoxin-type domain is found at 32–124 (GDITIKVNDE…DMDIEVPEEV (93 aa)). [2Fe-2S] cluster is bound by residues Cys67, Cys73, Cys76, and Cys108. The region spanning 127-267 (VKKWECTVIS…SGPFGEFFAK (141 aa)) is the FAD-binding FR-type domain.

It belongs to the NqrF family. Composed of six subunits; NqrA, NqrB, NqrC, NqrD, NqrE and NqrF. The cofactor is [2Fe-2S] cluster. It depends on FAD as a cofactor.

The protein localises to the cell inner membrane. It carries out the reaction a ubiquinone + n Na(+)(in) + NADH + H(+) = a ubiquinol + n Na(+)(out) + NAD(+). NQR complex catalyzes the reduction of ubiquinone-1 to ubiquinol by two successive reactions, coupled with the transport of Na(+) ions from the cytoplasm to the periplasm. The first step is catalyzed by NqrF, which accepts electrons from NADH and reduces ubiquinone-1 to ubisemiquinone by a one-electron transfer pathway. The protein is Na(+)-translocating NADH-quinone reductase subunit F of Neisseria gonorrhoeae (strain ATCC 700825 / FA 1090).